Reading from the N-terminus, the 358-residue chain is DNA ligase C (358 aa).

Catalysis depends on Lys29, which acts as the N6-AMP-lysine intermediate.

Belongs to the ATP-dependent DNA ligase family. It depends on a divalent metal cation as a cofactor.

The catalysed reaction is ATP + (deoxyribonucleotide)n-3'-hydroxyl + 5'-phospho-(deoxyribonucleotide)m = (deoxyribonucleotide)n+m + AMP + diphosphate.. Functionally, DNA ligase that seals nicks in double-stranded DNA during DNA replication, DNA recombination and DNA repair. In Mycobacterium tuberculosis (strain ATCC 25618 / H37Rv), this protein is DNA ligase C (ligC).